We begin with the raw amino-acid sequence, 340 residues long: 4-hydroxy-3-methylbut-2-enyl diphosphate reductase (340 aa).

Cys-18 contacts [4Fe-4S] cluster. Residues His-47 and His-83 each coordinate (2E)-4-hydroxy-3-methylbut-2-enyl diphosphate. The dimethylallyl diphosphate site is built by His-47 and His-83. Positions 47 and 83 each coordinate isopentenyl diphosphate. Cys-105 contributes to the [4Fe-4S] cluster binding site. Residue His-133 participates in (2E)-4-hydroxy-3-methylbut-2-enyl diphosphate binding. His-133 is a dimethylallyl diphosphate binding site. His-133 is a binding site for isopentenyl diphosphate. The active-site Proton donor is Glu-135. A (2E)-4-hydroxy-3-methylbut-2-enyl diphosphate-binding site is contributed by Thr-174. Cys-204 contacts [4Fe-4S] cluster. The (2E)-4-hydroxy-3-methylbut-2-enyl diphosphate site is built by Ser-232, Ser-233, Asn-234, and Ser-277. Dimethylallyl diphosphate contacts are provided by Ser-232, Ser-233, Asn-234, and Ser-277. Isopentenyl diphosphate contacts are provided by Ser-232, Ser-233, Asn-234, and Ser-277.

This sequence belongs to the IspH family. Requires [4Fe-4S] cluster as cofactor.

The catalysed reaction is isopentenyl diphosphate + 2 oxidized [2Fe-2S]-[ferredoxin] + H2O = (2E)-4-hydroxy-3-methylbut-2-enyl diphosphate + 2 reduced [2Fe-2S]-[ferredoxin] + 2 H(+). It catalyses the reaction dimethylallyl diphosphate + 2 oxidized [2Fe-2S]-[ferredoxin] + H2O = (2E)-4-hydroxy-3-methylbut-2-enyl diphosphate + 2 reduced [2Fe-2S]-[ferredoxin] + 2 H(+). It participates in isoprenoid biosynthesis; dimethylallyl diphosphate biosynthesis; dimethylallyl diphosphate from (2E)-4-hydroxy-3-methylbutenyl diphosphate: step 1/1. It functions in the pathway isoprenoid biosynthesis; isopentenyl diphosphate biosynthesis via DXP pathway; isopentenyl diphosphate from 1-deoxy-D-xylulose 5-phosphate: step 6/6. In terms of biological role, catalyzes the conversion of 1-hydroxy-2-methyl-2-(E)-butenyl 4-diphosphate (HMBPP) into a mixture of isopentenyl diphosphate (IPP) and dimethylallyl diphosphate (DMAPP). Acts in the terminal step of the DOXP/MEP pathway for isoprenoid precursor biosynthesis. This chain is 4-hydroxy-3-methylbut-2-enyl diphosphate reductase, found in Bartonella quintana (strain Toulouse) (Rochalimaea quintana).